A 387-amino-acid chain; its full sequence is Zinc transporter 7 (387 aa).

Topologically, residues 1–37 are cytoplasmic; the sequence is MLPLSIKDDEYKPAKFNLVVKLSGWFRSILADKTSRN. The chain crosses the membrane as a helical span at residues 38 to 58; it reads LFFFLCLNLSFAFVELLYGIW. The Lumenal segment spans residues 59–67; sequence SNSLGLISD. A helical membrane pass occupies residues 68–88; it reads SFHMFFDCTALLAGLAASVIS. Residues 89 to 102 lie on the Cytoplasmic side of the membrane; that stretch reads RWRSNDSFSYGYVR. The helical transmembrane segment at 103–123 threads the bilayer; it reads AEVLAGFVNGLFLIFTAFFIF. The Lumenal segment spans residues 124–140; that stretch reads SEGVERALEPPDVHHDR. The helical transmembrane segment at 141–161 threads the bilayer; it reads LLPVSIAGLLVNLVGIFVFQH. The interval 161-232 is his-rich loop; the sequence is HGGHGHSHGG…HDDQHCHDDH (72 aa). The Cytoplasmic segment spans residues 162–247; that stretch reads GGHGHSHGGD…KGSSKQILQG (86 aa). Residues 167-237 are disordered; it reads SHGGDDHGHS…CHDDHTLTPG (71 aa). Over residues 187–201 the composition is skewed to basic residues; that stretch reads GHSHGGHGHSHGGHG. Composition is skewed to basic and acidic residues over residues 202-214 and 221-233; these read HSHESKHGHDHGH and HSHDDQHCHDDHT. Residues 248–268 traverse the membrane as a helical segment; that stretch reads VFLHIVADTLGSVGVIISAIL. The Lumenal portion of the chain corresponds to 269-273; it reads MQKYD. The helical transmembrane segment at 274–294 threads the bilayer; it reads LMIADPICSMLIALLIGVSVV. Residues 295–387 are Cytoplasmic-facing; that stretch reads PLLRESIGIL…LYVQIEVAAM (93 aa).

This sequence belongs to the cation diffusion facilitator (CDF) transporter (TC 2.A.4) family. SLC30A subfamily. Homooligomer.

It is found in the golgi apparatus membrane. The protein resides in the cytoplasmic vesicle. The protein localises to the golgi apparatus. It localises to the trans-Golgi network. Its subcellular location is the sarcoplasmic reticulum. It is found in the mitochondrion. The enzyme catalyses Zn(2+)(in) = Zn(2+)(out). Functionally, zinc ion transporter mediating zinc entry from the cytosol into the lumen of organelles along the secretory pathway. By contributing to zinc ion homeostasis within the early secretory pathway, regulates the activation and folding of enzymes like alkaline phosphatases. The protein is Zinc transporter 7 (slc30a7) of Danio rerio (Zebrafish).